A 426-amino-acid polypeptide reads, in one-letter code: Zona pellucida sperm-binding protein 3 (426 aa).

The N-terminal stretch at 1–22 (MGLSYGIFICFLLLGGMELCCP) is a signal peptide. Q23 is modified (pyrrolidone carboxylic acid). Residues 23 to 385 (QTIWPTETYY…IEGSTSPHTS (363 aa)) are Extracellular-facing. Residues 43–305 (DCLESQLVVT…KACSFIKSTK (263 aa)) form the ZP domain. Disulfide bonds link C44–C138 and C76–C97. N-linked (GlcNAc...) asparagine glycans are attached at residues N123 and N145. Residues T154, T160, and T161 are each glycosylated (O-linked (GalNAc...) threonine). Disulfide bonds link C215-C280 and C237-C298. N244 is a glycosylation site (N-linked (GlcNAc...) asparagine). The propeptide at 351–426 (RRHVTEEAEI…PVICPASVSQ (76 aa)) is removed in mature form. A helical membrane pass occupies residues 386–406 (VMLGLGLATVVSLTLATIVLV). The Cytoplasmic portion of the chain corresponds to 407-426 (LAKRHRTASHPVICPASVSQ).

It belongs to the ZP domain family. ZPC subfamily. In terms of assembly, polymers of ZP2 and ZP3 organized into long filaments cross-linked by ZP1 homodimers. Interacts with ZP1 and ZP2. Post-translationally, proteolytically cleaved before the transmembrane segment to yield the secreted ectodomain incorporated in the zona pellucida. N-glycosylated. In terms of processing, O-glycosylated; removal of O-linked glycans may play an important role in the post-fertilization block to polyspermy. In terms of tissue distribution, expressed in oocytes.

Its subcellular location is the zona pellucida. The protein localises to the cell membrane. Component of the zona pellucida, an extracellular matrix surrounding oocytes which mediates sperm binding, induction of the acrosome reaction and prevents post-fertilization polyspermy. The zona pellucida is composed of 3 to 4 glycoproteins, ZP1, ZP2, ZP3, and ZP4. ZP3 is essential for sperm binding and zona matrix formation. This chain is Zona pellucida sperm-binding protein 3 (ZP3), found in Canis lupus familiaris (Dog).